The sequence spans 71 residues: Large ribosomal subunit protein uL29 (71 aa).

Belongs to the universal ribosomal protein uL29 family.

The chain is Large ribosomal subunit protein uL29 from Rickettsia africae (strain ESF-5).